Here is a 465-residue protein sequence, read N- to C-terminus: Kynurenine 3-monooxygenase (465 aa).

A disordered region spans residues 1–26 (MSPGIVSQEVNGRQEPTEAARDERHG). Positions 15–25 (EPTEAARDERH) are enriched in basic and acidic residues. 2 helical membrane-spanning segments follow: residues 405–427 (LLFR…SMPY) and 440–462 (LLKR…IYAQ).

Belongs to the aromatic-ring hydroxylase family. KMO subfamily. FAD is required as a cofactor.

The protein resides in the mitochondrion. Its subcellular location is the membrane. The catalysed reaction is L-kynurenine + NADPH + O2 + H(+) = 3-hydroxy-L-kynurenine + NADP(+) + H2O. Its pathway is cofactor biosynthesis; NAD(+) biosynthesis; quinolinate from L-kynurenine: step 1/3. In terms of biological role, catalyzes the hydroxylation of L-kynurenine (L-Kyn) to form 3-hydroxy-L-kynurenine (L-3OHKyn). Required for synthesis of quinolinic acid. This chain is Kynurenine 3-monooxygenase, found in Drosophila melanogaster (Fruit fly).